The following is a 540-amino-acid chain: Type II methyltransferase M.AccI (540 aa).

It belongs to the N(4)/N(6)-methyltransferase family. As to quaternary structure, monomer.

The catalysed reaction is a 2'-deoxyadenosine in DNA + S-adenosyl-L-methionine = an N(6)-methyl-2'-deoxyadenosine in DNA + S-adenosyl-L-homocysteine + H(+). In terms of biological role, a gamma subtype methylase, recognizes the double-stranded sequence 5'-GTMKAC-3', methylates A-5 on both strands, and protects the DNA from cleavage by the AccI endonuclease. This chain is Type II methyltransferase M.AccI (accIM), found in Acinetobacter calcoaceticus.